We begin with the raw amino-acid sequence, 121 residues long: Mitochondrial intermembrane space cysteine motif-containing protein MIX14 (121 aa).

2 consecutive CHCH domains span residues 14–56 (VANC…VPSV) and 60–105 (MSEC…VKNK). 4 short sequence motifs (cx9C motif) span residues 17 to 27 (CPQEFLQYHKC), 38 to 48 (CKDGRMILSTC), 63 to 73 (CSEPMKKYDQC), and 87 to 97 (CLGFLQDLRKC). 4 disulfide bridges follow: Cys-17–Cys-48, Cys-27–Cys-38, Cys-63–Cys-97, and Cys-73–Cys-87.

It is found in the mitochondrion intermembrane space. The protein is Mitochondrial intermembrane space cysteine motif-containing protein MIX14 (MIX14) of Saccharomyces cerevisiae (strain ATCC 204508 / S288c) (Baker's yeast).